A 368-amino-acid polypeptide reads, in one-letter code: 2-aminoethylphosphonate--pyruvate transaminase (368 aa).

At lysine 192 the chain carries N6-(pyridoxal phosphate)lysine.

The protein belongs to the class-V pyridoxal-phosphate-dependent aminotransferase family. PhnW subfamily. Homodimer. Requires pyridoxal 5'-phosphate as cofactor.

It carries out the reaction (2-aminoethyl)phosphonate + pyruvate = phosphonoacetaldehyde + L-alanine. Involved in phosphonate degradation. In Pseudomonas putida (strain ATCC 47054 / DSM 6125 / CFBP 8728 / NCIMB 11950 / KT2440), this protein is 2-aminoethylphosphonate--pyruvate transaminase.